The chain runs to 223 residues: Small ribosomal subunit protein uS3 (223 aa).

The KH type-2 domain maps to 39–108 (IRNFVKKNSY…NILINIVEVK (70 aa)).

Belongs to the universal ribosomal protein uS3 family. As to quaternary structure, part of the 30S ribosomal subunit. Forms a tight complex with proteins S10 and S14.

Functionally, binds the lower part of the 30S subunit head. Binds mRNA in the 70S ribosome, positioning it for translation. The sequence is that of Small ribosomal subunit protein uS3 from Clostridium botulinum (strain Hall / ATCC 3502 / NCTC 13319 / Type A).